Here is a 199-residue protein sequence, read N- to C-terminus: ATP-dependent Clp protease proteolytic subunit (199 aa).

Catalysis depends on Ser98, which acts as the Nucleophile. Residue His123 is part of the active site.

This sequence belongs to the peptidase S14 family. In terms of assembly, fourteen ClpP subunits assemble into 2 heptameric rings which stack back to back to give a disk-like structure with a central cavity, resembling the structure of eukaryotic proteasomes.

It localises to the cytoplasm. It catalyses the reaction Hydrolysis of proteins to small peptides in the presence of ATP and magnesium. alpha-casein is the usual test substrate. In the absence of ATP, only oligopeptides shorter than five residues are hydrolyzed (such as succinyl-Leu-Tyr-|-NHMec, and Leu-Tyr-Leu-|-Tyr-Trp, in which cleavage of the -Tyr-|-Leu- and -Tyr-|-Trp bonds also occurs).. In terms of biological role, cleaves peptides in various proteins in a process that requires ATP hydrolysis. Has a chymotrypsin-like activity. Plays a major role in the degradation of misfolded proteins. The chain is ATP-dependent Clp protease proteolytic subunit from Ehrlichia chaffeensis (strain ATCC CRL-10679 / Arkansas).